The sequence spans 149 residues: MEKRKDTKTTIVKSSETTKSWYVVDAAGKTLGRLSSEVAKILRGKHKVTYTPHVAMGDGVIVINAEKVRLTGAKKGQKIYRYYTGYISGMREIPFENMMARKPNYIIEHAIKGMMPRTRLGKKQLKSLRIVKGDSYETFESQKPILLDI.

It belongs to the universal ribosomal protein uL13 family. In terms of assembly, part of the 50S ribosomal subunit.

This protein is one of the early assembly proteins of the 50S ribosomal subunit, although it is not seen to bind rRNA by itself. It is important during the early stages of 50S assembly. The chain is Large ribosomal subunit protein uL13 from Chlamydia pneumoniae (Chlamydophila pneumoniae).